The chain runs to 308 residues: Ribosomal RNA large subunit methyltransferase F (308 aa).

The protein belongs to the methyltransferase superfamily. METTL16/RlmF family.

The protein localises to the cytoplasm. The enzyme catalyses adenosine(1618) in 23S rRNA + S-adenosyl-L-methionine = N(6)-methyladenosine(1618) in 23S rRNA + S-adenosyl-L-homocysteine + H(+). Its function is as follows. Specifically methylates the adenine in position 1618 of 23S rRNA. The chain is Ribosomal RNA large subunit methyltransferase F from Escherichia coli O6:H1 (strain CFT073 / ATCC 700928 / UPEC).